Here is a 1040-residue protein sequence, read N- to C-terminus: Multidrug resistance protein MdtB (1040 aa).

Transmembrane regions (helical) follow at residues 25-45 (LLMA…PVAA), 347-367 (LMLA…NIPA), 369-389 (IIPG…MVFL), 396-416 (LTLM…IVVI), 440-460 (IGFT…PLLF), 472-492 (FAVT…TLTP), 537-557 (WLTL…WIVI), 863-883 (LGST…VLGV), 888-908 (FIHP…ALLA), 910-930 (IIAG…LIGI), 968-988 (ILMT…STGV), and 998-1018 (IAMV…TPVI).

Belongs to the resistance-nodulation-cell division (RND) (TC 2.A.6) family. MdtB subfamily. Part of a tripartite efflux system composed of MdtA, MdtB and MdtC. MdtB forms a heteromultimer with MdtC.

Its subcellular location is the cell inner membrane. The sequence is that of Multidrug resistance protein MdtB from Salmonella agona (strain SL483).